A 234-amino-acid chain; its full sequence is Rhodanese-like domain-containing protein 9, chloroplastic (234 aa).

Residues Met1 to Ala47 constitute a chloroplast transit peptide. The Rhodanese domain maps to Ala62–Gly185. The active-site Cysteine persulfide intermediate is the Cys145. Residues Ile204–Phe222 traverse the membrane as a helical segment.

It localises to the plastid. It is found in the chloroplast. The protein resides in the membrane. This Arabidopsis thaliana (Mouse-ear cress) protein is Rhodanese-like domain-containing protein 9, chloroplastic (STR9).